The following is a 387-amino-acid chain: Dual-specificity RNA methyltransferase RlmN (387 aa).

Glu-110 (proton acceptor) is an active-site residue. The Radical SAM core domain occupies 117 to 349 (VGKAGALCVS…NRAGYASPIR (233 aa)). A disulfide bridge connects residues Cys-124 and Cys-360. The [4Fe-4S] cluster site is built by Cys-131, Cys-135, and Cys-138. S-adenosyl-L-methionine is bound by residues 186-187 (GE), Ser-218, 240-242 (SLH), and Asn-317. Cys-360 serves as the catalytic S-methylcysteine intermediate.

It belongs to the radical SAM superfamily. RlmN family. [4Fe-4S] cluster serves as cofactor.

The protein localises to the cytoplasm. It catalyses the reaction adenosine(2503) in 23S rRNA + 2 reduced [2Fe-2S]-[ferredoxin] + 2 S-adenosyl-L-methionine = 2-methyladenosine(2503) in 23S rRNA + 5'-deoxyadenosine + L-methionine + 2 oxidized [2Fe-2S]-[ferredoxin] + S-adenosyl-L-homocysteine. The catalysed reaction is adenosine(37) in tRNA + 2 reduced [2Fe-2S]-[ferredoxin] + 2 S-adenosyl-L-methionine = 2-methyladenosine(37) in tRNA + 5'-deoxyadenosine + L-methionine + 2 oxidized [2Fe-2S]-[ferredoxin] + S-adenosyl-L-homocysteine. Its function is as follows. Specifically methylates position 2 of adenine 2503 in 23S rRNA and position 2 of adenine 37 in tRNAs. m2A2503 modification seems to play a crucial role in the proofreading step occurring at the peptidyl transferase center and thus would serve to optimize ribosomal fidelity. In Hyphomonas neptunium (strain ATCC 15444), this protein is Dual-specificity RNA methyltransferase RlmN.